Reading from the N-terminus, the 273-residue chain is Urease accessory protein UreD (273 aa).

It belongs to the UreD family. In terms of assembly, ureD, UreF and UreG form a complex that acts as a GTP-hydrolysis-dependent molecular chaperone, activating the urease apoprotein by helping to assemble the nickel containing metallocenter of UreC. The UreE protein probably delivers the nickel.

It localises to the cytoplasm. Required for maturation of urease via the functional incorporation of the urease nickel metallocenter. The sequence is that of Urease accessory protein UreD from Rhizobium johnstonii (strain DSM 114642 / LMG 32736 / 3841) (Rhizobium leguminosarum bv. viciae).